Reading from the N-terminus, the 218-residue chain is MNQQLLKEKVAAAVLEHVPENITLGVGSGSTVLCFIEALKQAKRQFRDIVAASETSSKALEAAGFRVRDLNACDPPDIYVDGADEINDDKIMIKGGGAALTREKIIASAAKEFICIIDESKKVAQLGRFPVAVEVIPMARSYVAREIVKLGAEPRWRQGVVTDNGHWILDVHYLDLTAAERMEARINTIAGVVECGIFAQRRADKVLMSQSDGEIVLW.

Substrate is bound by residues 28 to 31 (SGST), 81 to 84 (DGAD), and 94 to 97 (KGGG). Residue E103 is the Proton acceptor of the active site. A substrate-binding site is contributed by K121.

The protein belongs to the ribose 5-phosphate isomerase family. As to quaternary structure, homodimer.

It carries out the reaction aldehydo-D-ribose 5-phosphate = D-ribulose 5-phosphate. It functions in the pathway carbohydrate degradation; pentose phosphate pathway; D-ribose 5-phosphate from D-ribulose 5-phosphate (non-oxidative stage): step 1/1. In terms of biological role, catalyzes the reversible conversion of ribose-5-phosphate to ribulose 5-phosphate. This is Ribose-5-phosphate isomerase A from Dichelobacter nodosus (strain VCS1703A).